The primary structure comprises 291 residues: Small ribosomal subunit protein uS2 (291 aa).

Residues 231 to 291 (NRGSGTTEAP…AAEAPAEDAK (61 aa)) are disordered. The span at 246-259 (EWERELLEGSKAEE) shows a compositional bias: basic and acidic residues. Positions 260–285 (AAAAAPAENAEAPAAPAAEAPAAAEA) are enriched in low complexity.

The protein belongs to the universal ribosomal protein uS2 family.

The chain is Small ribosomal subunit protein uS2 from Pseudarthrobacter chlorophenolicus (strain ATCC 700700 / DSM 12829 / CIP 107037 / JCM 12360 / KCTC 9906 / NCIMB 13794 / A6) (Arthrobacter chlorophenolicus).